We begin with the raw amino-acid sequence, 234 residues long: Thrombin-like enzyme acutin (234 aa).

A propeptide is located at residue Met1. Residues 2-225 enclose the Peptidase S1 domain; the sequence is VIGGDECDIN…YTDWIQRNIA (224 aa). 6 cysteine pairs are disulfide-bonded: Cys8–Cys140, Cys27–Cys43, Cys75–Cys232, Cys119–Cys186, Cys151–Cys165, and Cys176–Cys201. An N-linked (GlcNAc...) asparagine glycan is attached at Asn21. Catalysis depends on charge relay system residues His42 and Asp87. The Charge relay system role is filled by Ser180.

This sequence belongs to the peptidase S1 family. Snake venom subfamily. As to quaternary structure, monomer. In terms of tissue distribution, expressed by the venom gland.

Its subcellular location is the secreted. Thrombin-like snake venom serine protease. Has arginyl esterase and fibrinogen clotting activities. The polypeptide is Thrombin-like enzyme acutin (Deinagkistrodon acutus (Hundred-pace snake)).